The following is a 343-amino-acid chain: Mas-related G-protein coupled receptor member F (343 aa).

Residues 1–44 (MAGNCSWEAHSTNQNKMCPGMSEARELYSRGFLTIEQIATLPPP) are Extracellular-facing. Asn4 carries an N-linked (GlcNAc...) asparagine glycan. A helical transmembrane segment spans residues 45-66 (AVTNYIFLLLCLCGLVGNGLVL). At 67-82 (WFFGFSIKRTPFSIYF) the chain is on the cytoplasmic side. Residues 83–104 (LHLASADGMYLFSKAVIALLNM) traverse the membrane as a helical segment. Residues 105–123 (GTFLGSFPDYIRRVSRIVG) are Extracellular-facing. Residues 124–144 (LCTFFTGVSLLPAISIERCVS) form a helical membrane-spanning segment. At 145-160 (VIFPTWYWRRRPKRLS) the chain is on the cytoplasmic side. The helical transmembrane segment at 161-181 (AGVCALLWMLSFLVTSIHNYF) threads the bilayer. At 182–198 (CMFLGHEAPGTVCRNMD) the chain is on the extracellular side. The chain crosses the membrane as a helical span at residues 199-220 (IALGILLFFLFCPLMVLPCLAL). Over 221-241 (ILHVECRARRRQRSAKLNHVV) the chain is Cytoplasmic. Residues 242–263 (LAIVSVFLVSSIYLGIDWFLFW) form a helical membrane-spanning segment. Over 264–273 (VFQIPAPFPE) the chain is Extracellular. Residues 274 to 294 (YVTDLCICINSSAKPIVYFLA) traverse the membrane as a helical segment. Residues 295 to 343 (GRDKSQRLWEPLRVVFQRALRDGAEPGDAASSTPNTVTMEMQCPSGNAS) are Cytoplasmic-facing. Residues 318-343 (AEPGDAASSTPNTVTMEMQCPSGNAS) form a disordered region. The span at 324–343 (ASSTPNTVTMEMQCPSGNAS) shows a compositional bias: polar residues.

Belongs to the G-protein coupled receptor 1 family. Mas subfamily.

It localises to the cell membrane. In terms of biological role, orphan receptor. May bind to a neuropeptide and may regulate nociceptor function and/or development, including the sensation or modulation of pain. This is Mas-related G-protein coupled receptor member F (Mrgprf) from Mus musculus (Mouse).